Reading from the N-terminus, the 109-residue chain is uncharacterized protein (109 aa).

The protein resides in the mitochondrion. This is an uncharacterized protein from Marchantia polymorpha (Common liverwort).